Here is a 135-residue protein sequence, read N- to C-terminus: Retinol-binding protein 1 (135 aa).

Residues 22–32 (RALDVNVALRK) are important for interaction with STRA6. All-trans-retinol contacts are provided by lysine 41, methionine 63, and glutamine 109.

The protein belongs to the calycin superfamily. Fatty-acid binding protein (FABP) family. Interacts (only as retinol-free apoprotein) with STRA6.

It localises to the cytoplasm. Its subcellular location is the lipid droplet. Cytoplasmic retinol-binding protein. Accepts retinol from the transport protein STRA6, and thereby contributes to retinol uptake, storage and retinoid homeostasis. This Mus musculus (Mouse) protein is Retinol-binding protein 1 (Rbp1).